The chain runs to 170 residues: Peptide deformylase (170 aa).

2 residues coordinate Fe cation: Cys94 and His136. The active site involves Glu137. His140 is a binding site for Fe cation.

Belongs to the polypeptide deformylase family. It depends on Fe(2+) as a cofactor.

It catalyses the reaction N-terminal N-formyl-L-methionyl-[peptide] + H2O = N-terminal L-methionyl-[peptide] + formate. Functionally, removes the formyl group from the N-terminal Met of newly synthesized proteins. Requires at least a dipeptide for an efficient rate of reaction. N-terminal L-methionine is a prerequisite for activity but the enzyme has broad specificity at other positions. This chain is Peptide deformylase, found in Stenotrophomonas maltophilia (strain K279a).